The chain runs to 342 residues: Trans-3-hydroxy-L-proline dehydratase (342 aa).

Serine 90 serves as the catalytic Proton acceptor. Substrate contacts are provided by residues 91-92 (GS), aspartate 252, and 257-258 (GT).

Belongs to the proline racemase family.

The catalysed reaction is trans-3-hydroxy-L-proline = 1-pyrroline-2-carboxylate + H2O. It catalyses the reaction trans-4-hydroxy-L-proline = cis-4-hydroxy-D-proline. Catalyzes the dehydration of trans-3-hydroxy-L-proline (t3LHyp) to Delta(1)-pyrroline-2-carboxylate (Pyr2C). Can also catalyze the epimerization of trans-4-hydroxy-L-proline (t4LHyp) to cis-4-hydroxy-D-proline (c4DHyp), albeit with 30-fold lower efficiency. Is likely involved in both degradation pathways that convert t3LHyp to L-proline and t4LHyp to alpha-ketoglutarate, which would allow A.tumefaciens to grow on t3LHyp or t4LHyp as a sole carbon source. Displays no proline racemase activity. In Agrobacterium fabrum (strain C58 / ATCC 33970) (Agrobacterium tumefaciens (strain C58)), this protein is Trans-3-hydroxy-L-proline dehydratase.